A 509-amino-acid chain; its full sequence is MAAIGVHLGCTSACVAVYKDGRAGVVANDAGDRVTPAVVAYSENEEIVGLAAKQSRIRNISNTVMKVKQILGRSSNDPQAQKYITESKCLVIEKNGKLRYEIDTGEETRFVNPEDVVRLIFSKMKETAHSVLGSDANDVVITVPFDFGEKQKNALGEAARAAGFNVLRLIHEPSAALLAYGIGQDSPNGKSNILVFKLGGTSLSLSVMEVNSGIYRVLSTNTDDNIGGAHFTETLAQYLASEFQRSFKHDVKGNARAMMKLMNSAEVAKHSLSTLGSANCFLDSLYEGQDFDCNVSRARFELLCSPLFNKCIEAIRGLLDQSGFTADDINKVVLCGGSSRIPKLQQLIKDLFPAVELLNSIPPDEVIPIGAAIEAGILIGKENLLVEDSLMIECSARDILVKGVDESGASRFTVLFPSGTPLPARRQHTLQAPGSISSVCLELYESDGKNSAKEETKFAQVVLQDLDKKENGLRDILAVLTMKRDGSLHVTCTDQETGKCEAISIEVAS.

Belongs to the heat shock protein 70 family. As to quaternary structure, component of ribosome-associated complex (RAC), a heterodimer composed of Hsp70/DnaK-type chaperone HSPA14 and Hsp40/DnaJ-type chaperone DNAJC2.

It localises to the cytoplasm. The protein resides in the cytosol. Component of the ribosome-associated complex (RAC), a complex involved in folding or maintaining nascent polypeptides in a folding-competent state. In the RAC complex, binds to the nascent polypeptide chain, while DNAJC2 stimulates its ATPase activity. This chain is Heat shock 70 kDa protein 14 (HSPA14), found in Macaca fascicularis (Crab-eating macaque).